A 361-amino-acid polypeptide reads, in one-letter code: tRNA/tmRNA (uracil-C(5))-methyltransferase (361 aa).

S-adenosyl-L-methionine is bound by residues Gln-183, Tyr-211, Asn-216, Glu-232, and Asp-294. Cys-319 functions as the Nucleophile in the catalytic mechanism. Glu-353 functions as the Proton acceptor in the catalytic mechanism.

The protein belongs to the class I-like SAM-binding methyltransferase superfamily. RNA M5U methyltransferase family. TrmA subfamily.

The enzyme catalyses uridine(54) in tRNA + S-adenosyl-L-methionine = 5-methyluridine(54) in tRNA + S-adenosyl-L-homocysteine + H(+). It catalyses the reaction uridine(341) in tmRNA + S-adenosyl-L-methionine = 5-methyluridine(341) in tmRNA + S-adenosyl-L-homocysteine + H(+). In terms of biological role, dual-specificity methyltransferase that catalyzes the formation of 5-methyluridine at position 54 (m5U54) in all tRNAs, and that of position 341 (m5U341) in tmRNA (transfer-mRNA). The protein is tRNA/tmRNA (uracil-C(5))-methyltransferase of Acinetobacter baumannii (strain ACICU).